Consider the following 400-residue polypeptide: Forkhead box protein A4-B (400 aa).

A DNA-binding region (fork-head) is located at residues 119 to 213; sequence KPPYSYISLI…ENGCYLRRQK (95 aa). The segment covering 218–234 has biased composition (basic and acidic residues); that stretch reads ERSKSGEGERKGNKPGD. The interval 218–290 is disordered; that stretch reads ERSKSGEGER…VGFSPTSEQA (73 aa). 2 stretches are compositionally biased toward polar residues: residues 249–258 and 267–277; these read DCSSSRSPQA and STGSSIHQATG.

Primarily expressed in the dorsal blastopore lip (Spemann organizer) of early gastrulae. At later stages, expressed in the dorsal mesoderm and the neural floor plate. In the dorsal mesoderm, expressed in the notochord but not in the presomitic mesoderm. Also expressed in the mid-brain area.

It is found in the nucleus. In terms of biological role, transcriptional repressor involved in embryonic nervous system development. Plays a role in the induction and patterning of the anterior-posterior neural axis. Involved in the establishment of floor plate differentiation from neural plate cells during gastrulation. Binds the anf1 promoter sequence to restrict expression of anf1 to the anterior of the neural plate, thereby patterning the forebrain. Can bind to the HNF-3-alpha DNA target sequence. Cooperates with t/bra in a dose-dependent manner to specify dorsal mesoderm formation, including notochord. May be involved in the dorso-ventral patterning of the mesoderm. Binds to DNA via the target sequence 5'-[GA]TAAA[TC]A-3', with 5'-GTAAATA-3' being the preferred binding site. The sequence is that of Forkhead box protein A4-B (foxa4-b) from Xenopus laevis (African clawed frog).